We begin with the raw amino-acid sequence, 557 residues long: Hemolysin transporter protein ShlB (557 aa).

Positions 1 to 18 are cleaved as a signal peptide; sequence MIKKITALTLLVSTALSA. The POTRA domain occupies 79–152; the sequence is LPIAGVYLQG…GELGLSVTEG (74 aa).

It belongs to the TPS (TC 1.B.20) family.

The protein resides in the cell outer membrane. Its function is as follows. Interacts with the cell-bound hemolysin. Necessary for the extracellular secretion and activation of hemolysin. Member of a two partner secretion pathway (TPS) in which it mediates the secretion of hemolysin. This is Hemolysin transporter protein ShlB (shlB) from Serratia marcescens.